The primary structure comprises 884 residues: DNA mismatch repair protein MutS (884 aa).

Residue 601–608 (GPNMSGKS) coordinates ATP. A disordered region spans residues 826–845 (ESQLSFFGGEQSSKKQDKPL).

The protein belongs to the DNA mismatch repair MutS family.

Its function is as follows. This protein is involved in the repair of mismatches in DNA. It is possible that it carries out the mismatch recognition step. This protein has a weak ATPase activity. The chain is DNA mismatch repair protein MutS from Bacillus cereus (strain ATCC 14579 / DSM 31 / CCUG 7414 / JCM 2152 / NBRC 15305 / NCIMB 9373 / NCTC 2599 / NRRL B-3711).